A 243-amino-acid chain; its full sequence is uncharacterized protein (243 aa).

Residues arginine 26–leucine 204 enclose the VWFA domain. The tract at residues arginine 222 to lysine 243 is disordered. Residues proline 231–lysine 243 show a composition bias toward basic residues.

This is an uncharacterized protein from Bacillus subtilis (strain 168).